Here is a 360-residue protein sequence, read N- to C-terminus: UPF0496 protein At3g19250 (360 aa).

Residues 1 to 29 are disordered; sequence MPHCFTFKPASPEGSLGDDHLPHPSPEGS. 2 helical membrane-spanning segments follow: residues 205–225 and 229–249; these read HHATAGSALCLVTAVVVVAAS and IAYHALPTILVVAGPLCTPYL.

The protein belongs to the UPF0496 family.

It localises to the membrane. This is UPF0496 protein At3g19250 from Arabidopsis thaliana (Mouse-ear cress).